A 391-amino-acid polypeptide reads, in one-letter code: Ferrochelatase (391 aa).

Residues His-196 and Glu-281 each coordinate Fe cation.

This sequence belongs to the ferrochelatase family.

It localises to the cytoplasm. It carries out the reaction heme b + 2 H(+) = protoporphyrin IX + Fe(2+). It participates in porphyrin-containing compound metabolism; protoheme biosynthesis; protoheme from protoporphyrin-IX: step 1/1. In terms of biological role, catalyzes the ferrous insertion into protoporphyrin IX. The sequence is that of Ferrochelatase from Prochlorococcus marinus subsp. pastoris (strain CCMP1986 / NIES-2087 / MED4).